Consider the following 376-residue polypeptide: Uroporphyrinogen decarboxylase (376 aa).

Substrate contacts are provided by residues 29–33 (RQAGR), aspartate 79, tyrosine 155, serine 210, and histidine 342.

It belongs to the uroporphyrinogen decarboxylase family. Homodimer.

It localises to the cytoplasm. The enzyme catalyses uroporphyrinogen III + 4 H(+) = coproporphyrinogen III + 4 CO2. The protein operates within porphyrin-containing compound metabolism; protoporphyrin-IX biosynthesis; coproporphyrinogen-III from 5-aminolevulinate: step 4/4. Catalyzes the decarboxylation of four acetate groups of uroporphyrinogen-III to yield coproporphyrinogen-III. The protein is Uroporphyrinogen decarboxylase of Paracidovorax citrulli (strain AAC00-1) (Acidovorax citrulli).